We begin with the raw amino-acid sequence, 372 residues long: L-selectin (372 aa).

The signal sequence occupies residues 1–28; the sequence is MVFPWRCEGTYWGSRNILKLWVWTLLCC. The propeptide occupies 29–38; sequence DFLIHHGTHC. Topologically, residues 39–332 are extracellular; it reads WTYHYSEKPM…FSKIKEGDYN (294 aa). One can recognise a C-type lectin domain in the interval 55–155; sequence KFCKQNYTDL…ACHKRKAALC (101 aa). 10 cysteine pairs are disulfide-bonded: C57–C155, C128–C147, C128–C160, C160–C171, C165–C180, C182–C191, C197–C241, C227–C254, C259–C303, and C289–C316. Residues N60 and N104 are each glycosylated (N-linked (GlcNAc...) asparagine). The Ca(2+) site is built by E118, N120, E126, N143, and D144. The EGF-like domain maps to 156 to 192; it reads YTASCQPGSCNGRGECVETINNHTCICDAGYYGPQCQ. A glycan (N-linked (GlcNAc...) asparagine) is linked at N177. 2 Sushi domains span residues 195 to 256 and 257 to 318; these read VQCE…ICQV and VQCE…ICQE. N-linked (GlcNAc...) asparagine glycans are attached at residues N216, N226, N246, N278, N288, N308, and N320. The chain crosses the membrane as a helical span at residues 333-355; sequence PLFIPVAVMVTAFSGLAFLIWLA. At 356 to 372 the chain is on the cytoplasmic side; that stretch reads RRLKKGKKSQERMDDPY.

It belongs to the selectin/LECAM family. As to quaternary structure, interaction with SELPLG/PSGL1 and PODXL2 is required for promoting recruitment and rolling of leukocytes. This interaction is dependent on the sialyl Lewis X glycan modification of SELPLG and PODXL2, and tyrosine sulfation modifications of SELPLG. Sulfation on 'Tyr-51' of SELPLG is important for L-selectin binding. In terms of processing, N-glycosylated. Predominantly expressed in lymphoid tissue.

It localises to the cell membrane. Its function is as follows. Calcium-dependent lectin that mediates cell adhesion by binding to glycoproteins on neighboring cells. Mediates the adherence of lymphocytes to endothelial cells of high endothelial venules in peripheral lymph nodes. Promotes initial tethering and rolling of leukocytes in endothelia. This is L-selectin (Sell) from Mus musculus (Mouse).